The following is a 633-amino-acid chain: Pentatricopeptide repeat-containing protein At3g24000, mitochondrial (633 aa).

A mitochondrion-targeting transit peptide spans 1–63; that stretch reads MALRFPPRLL…SYIPADRRFY (63 aa). PPR repeat units follow at residues 94–124, 125–159, 160–194, 195–225, 226–260, 261–295, 296–326, 327–361, 362–396, and 397–431; these read DIVM…MPQR, DFVT…GYSP, NEFT…GFDS, NVHV…LESR, NDVS…GFRP, SHFS…GEKL, VAFA…LAKR, DVVS…GIRP, NEIS…GIVP, and EAWH…PTAA. The segment at 432-507 is type E motif; that stretch reads IWKALLNACR…EPACSWVEIE (76 aa). The segment at 508 to 538 is type E(+) motif; the sequence is NAIHMFVANDERHPQREEIARKWEEVLAKIK. The type DYW motif stretch occupies residues 539–633; the sequence is ELGYVPDTSH…DGNCSCKDYW (95 aa).

This sequence belongs to the PPR family. PCMP-H subfamily.

Its subcellular location is the mitochondrion. This chain is Pentatricopeptide repeat-containing protein At3g24000, mitochondrial (PCMP-H87), found in Arabidopsis thaliana (Mouse-ear cress).